Here is a 174-residue protein sequence, read N- to C-terminus: Small ribosomal subunit protein uS5 (174 aa).

The S5 DRBM domain occupies 19-82; it reads LREKMVAINR…DEARRKLKKI (64 aa).

Belongs to the universal ribosomal protein uS5 family. As to quaternary structure, part of the 30S ribosomal subunit. Contacts proteins S4 and S8.

In terms of biological role, with S4 and S12 plays an important role in translational accuracy. Located at the back of the 30S subunit body where it stabilizes the conformation of the head with respect to the body. In Aromatoleum aromaticum (strain DSM 19018 / LMG 30748 / EbN1) (Azoarcus sp. (strain EbN1)), this protein is Small ribosomal subunit protein uS5.